A 119-amino-acid polypeptide reads, in one-letter code: Large ribosomal subunit protein bL12 (119 aa).

It belongs to the bacterial ribosomal protein bL12 family. As to quaternary structure, homodimer. Part of the ribosomal stalk of the 50S ribosomal subunit. Forms a multimeric L10(L12)X complex, where L10 forms an elongated spine to which 2 to 4 L12 dimers bind in a sequential fashion. Binds GTP-bound translation factors.

Functionally, forms part of the ribosomal stalk which helps the ribosome interact with GTP-bound translation factors. Is thus essential for accurate translation. The chain is Large ribosomal subunit protein bL12 from Colwellia psychrerythraea (strain 34H / ATCC BAA-681) (Vibrio psychroerythus).